We begin with the raw amino-acid sequence, 284 residues long: 2-dehydro-3-deoxyphosphooctonate aldolase (284 aa).

It belongs to the KdsA family.

The protein resides in the cytoplasm. It carries out the reaction D-arabinose 5-phosphate + phosphoenolpyruvate + H2O = 3-deoxy-alpha-D-manno-2-octulosonate-8-phosphate + phosphate. The protein operates within carbohydrate biosynthesis; 3-deoxy-D-manno-octulosonate biosynthesis; 3-deoxy-D-manno-octulosonate from D-ribulose 5-phosphate: step 2/3. It functions in the pathway bacterial outer membrane biogenesis; lipopolysaccharide biosynthesis. The sequence is that of 2-dehydro-3-deoxyphosphooctonate aldolase from Pseudoalteromonas translucida (strain TAC 125).